Here is a 262-residue protein sequence, read N- to C-terminus: Thrombin-like enzyme calobin-1 (262 aa).

Positions 1 to 18 are cleaved as a signal peptide; the sequence is MVLISVLANLLILQLSYA. Residues 19–24 constitute a propeptide that is removed on maturation; the sequence is QKSSEL. The 229-residue stretch at 25-253 folds into the Peptidase S1 domain; that stretch reads VIGGDECNIN…HLDWIQSIIA (229 aa). Intrachain disulfides connect cysteine 31-cysteine 165, cysteine 52-cysteine 68, cysteine 100-cysteine 260, cysteine 144-cysteine 214, cysteine 176-cysteine 193, and cysteine 204-cysteine 229. Histidine 67 serves as the catalytic Charge relay system. N-linked (GlcNAc...) asparagine glycosylation occurs at asparagine 105. Aspartate 112 acts as the Charge relay system in catalysis. The active-site Charge relay system is serine 208.

It belongs to the peptidase S1 family. Snake venom subfamily. Monomer. Post-translationally, N-glycosylated. As to expression, expressed by the venom gland.

The protein localises to the secreted. With respect to regulation, strongly inhibited by PMSF, and moderately by benzamidine and soybean trypsin inhibitor. Functionally, thrombin-like snake venom serine protease. Has a coagulant activity. Acts on alpha-chains of fibrinogen (FGA) generating fibrinopeptide A. This chain is Thrombin-like enzyme calobin-1, found in Gloydius ussuriensis (Ussuri mamushi).